The following is a 669-amino-acid chain: Exostosin-like 1 (669 aa).

Over 1–8 (MLWRRKSF) the chain is Cytoplasmic. The helical; Signal-anchor for type II membrane protein transmembrane segment at 9–29 (WLALSAFWLLLVLLGVFPLRL) threads the bilayer. At 30 to 669 (AVLPGPLPGR…RKKYRSLEKP (640 aa)) the chain is on the lumenal side. 2 N-linked (GlcNAc...) asparagine glycosylation sites follow: Asn263 and Asn480. Cys577 and Cys627 are disulfide-bonded. Residues 601-621 (RQHPEAVPMDSGDPRPVPEPQ) form a disordered region.

It belongs to the glycosyltransferase 47 family.

It localises to the endoplasmic reticulum membrane. The enzyme catalyses 3-O-{[(1-&gt;4)-beta-D-GlcA-(1-&gt;4)-alpha-D-GlcNAc](n)-(1-&gt;4)-beta-D-GlcA-(1-&gt;3)-beta-D-Gal-(1-&gt;3)-beta-D-Gal-(1-&gt;4)-beta-D-Xyl}-L-seryl-[protein] + UDP-N-acetyl-alpha-D-glucosamine = 3-O-{alpha-D-GlcNAc-[(1-&gt;4)-beta-D-GlcA-(1-&gt;4)-alpha-D-GlcNAc](n)-(1-&gt;4)-beta-D-GlcA-(1-&gt;3)-beta-D-Gal-(1-&gt;3)-beta-D-Gal-(1-&gt;4)-beta-D-Xyl}-L-seryl-[protein] + UDP + H(+). It participates in protein modification; protein glycosylation. Functionally, glycosyltransferase required for the biosynthesis of heparan-sulfate (HS). Transfers N-acetyl-alpha-D-glucosamine to the nascent HS chain (GlcNAcT-II activity). Appears to lack GlcNAcT I and GlcAT-II activities. The sequence is that of Exostosin-like 1 (Extl1) from Mus musculus (Mouse).